The following is a 180-amino-acid chain: Translation initiation factor IF-3 (180 aa).

The protein belongs to the IF-3 family. In terms of assembly, monomer.

Its subcellular location is the cytoplasm. Its function is as follows. IF-3 binds to the 30S ribosomal subunit and shifts the equilibrium between 70S ribosomes and their 50S and 30S subunits in favor of the free subunits, thus enhancing the availability of 30S subunits on which protein synthesis initiation begins. This chain is Translation initiation factor IF-3, found in Salmonella paratyphi A (strain ATCC 9150 / SARB42).